A 179-amino-acid chain; its full sequence is NADH:FAD oxidoreductase (179 aa).

48 to 51 (TCSA) lines the FAD pocket. 54-57 (SVCD) provides a ligand contact to NAD(+). FAD is bound by residues 65–71 (CINRKSY), Ala-99, 104–109 (VPMEER), and Ser-144. NAD(+)-binding positions include His-145 and 166-169 (YHRR). Tyr-166 contacts FAD.

This sequence belongs to the non-flavoprotein flavin reductase family. In terms of assembly, homodimer. The chlorophenol-4-monooxygenase is composed of an oxygenase component TftD and a reductase component TftC.

It catalyses the reaction FADH2 + NAD(+) = FAD + NADH + 2 H(+). The protein operates within xenobiotic degradation. Its function is as follows. Reductase component of a two-component system that degrades 2,4,5-trichlorophenol. TftC provides the FADH(2) required by TftD. TftD oxidizes 2,4,5-trichlorophenol (2,4,5-TCP) to 2,5-dichloro-p-benzoquinone, which is chemically reduced to 2,5-dichloro-p-hydroquinone (2,5-DiCHQ). Then, TftD oxidizes the latter to 5-chloro-2-hydroxy-p-benzoquinone. This chain is NADH:FAD oxidoreductase (tftC), found in Burkholderia cepacia (Pseudomonas cepacia).